We begin with the raw amino-acid sequence, 387 residues long: Acetylajmalan esterase (387 aa).

The N-terminal stretch at 1–22 is a signal peptide; it reads MGFARLLHLVFSLLVFAGITNG. The Nucleophile role is filled by serine 36. Residues asparagine 98, asparagine 180, asparagine 199, asparagine 249, and asparagine 296 are each glycosylated (N-linked (GlcNAc...) asparagine). Residues aspartate 337 and histidine 340 contribute to the active site.

The protein belongs to the 'GDSL' lipolytic enzyme family.

The catalysed reaction is 17-O-acetylajmaline + H2O = ajmaline + acetate + H(+). The enzyme catalyses 17-O-acetylnorajmaline + H2O = norajmaline + acetate + H(+). The protein operates within alkaloid biosynthesis; ajmaline biosynthesis. In terms of biological role, acetylesterase involved in the biosynthesis of ajmaline-type monoterpenoid indole alkaloids (MIAs) natural products, important plant-derived pharmaceuticals used in the therapy of heart disorders. Deacetylates 17-O-acetylajmaline and 17-O-acetylnorajmaline to produce ajmaline and norajmaline, but is inactive toward other acetylated alkaloids. The polypeptide is Acetylajmalan esterase (Rauvolfia serpentina (Serpentine wood)).